Consider the following 569-residue polypeptide: MLO-like protein 10 (569 aa).

Over 1-41 (MATRCFWCWTTLLFCSQLLTGFARASSAGGAKEKGLSQTPT) the chain is Extracellular. A helical transmembrane segment spans residues 42-62 (WAVALVCTFFILVSVLLEKAL). The Cytoplasmic segment spans residues 63-85 (HRVATWLWEKHKNSLLEALEKIK). A helical membrane pass occupies residues 86–106 (AELMILGFISLLLTFGEQYIL). The Extracellular segment spans residues 107–163 (KICIPEKAAASMLPCPAPSTHDQDKTHRRRLAAATTSSRCDEGHEPLIPATGLHQLH). The helical transmembrane segment at 164-184 (ILLFFMAAFHILYSFITMMLG) threads the bilayer. At 185–286 (RLKIRGWKKW…IKRSLEDDFK (102 aa)) the chain is on the cytoplasmic side. The helical transmembrane segment at 287 to 307 (VVVGISPLLWASFVIFLLLNV) threads the bilayer. Residue Asn308 is a topological domain, extracellular. A helical membrane pass occupies residues 309-329 (GWEALFWASILPVLIILAVST). The Cytoplasmic segment spans residues 330–372 (KLQAILTRMALGITERHAVVQGIPLVHGSDKYFWFNRPQLLLH). Residues 373 to 393 (LLHFALFQNAFQLTYFFWVWY) form a helical membrane-spanning segment. At 394-413 (SFGLKSCFHTDFKLVIVKLS) the chain is on the extracellular side. A helical transmembrane segment spans residues 414 to 434 (LGVGALILCSYITLPLYALVT). Over 435 to 569 (QMGSNMKKAV…VKNVPANDID (135 aa)) the chain is Cytoplasmic. A calmodulin-binding region spans residues 447-468 (EQMAKALKKWHMTVKKKKGKAR).

Belongs to the MLO family.

It is found in the membrane. Its function is as follows. May be involved in modulation of pathogen defense and leaf cell death. Activity seems to be regulated by Ca(2+)-dependent calmodulin binding and seems not to require heterotrimeric G proteins. The chain is MLO-like protein 10 (MLO10) from Arabidopsis thaliana (Mouse-ear cress).